A 252-amino-acid chain; its full sequence is C4b-binding protein beta chain (252 aa).

A signal peptide spans 1 to 17 (MFFWCACCLMVAWRVSA). Sushi domains follow at residues 21–78 (EHCP…ECRL), 79–136 (GHCP…ICKS), and 137–193 (RDCD…VCKL). Disulfide bonds link cysteine 23–cysteine 63, cysteine 49–cysteine 76, cysteine 81–cysteine 121, cysteine 107–cysteine 134, cysteine 139–cysteine 179, and cysteine 165–cysteine 191. Residues asparagine 64, asparagine 71, asparagine 98, asparagine 117, and asparagine 154 are each glycosylated (N-linked (GlcNAc...) asparagine).

As to quaternary structure, disulfide-linked complex of alpha and beta chains of 3 possible sorts: a 570 kDa complex of 7 alpha chains and 1 beta chain, a 530 kDa homoheptamer of alpha chains or a 500 kDa complex of 6 alpha chains and 1 beta chain. The central body of the alpha chain homomer supports tentacles, each with the binding site for C4b at the end.

The protein localises to the secreted. Its function is as follows. Controls the classical pathway of complement activation. It binds as a cofactor to C3b/C4b inactivator (C3bINA), which then hydrolyzes the complement fragment C4b. It also accelerates the degradation of the C4bC2a complex (C3 convertase) by dissociating the complement fragment C2a. It also interacts with anticoagulant protein S and with serum amyloid P component. The beta chain binds protein S. This is C4b-binding protein beta chain (C4BPB) from Homo sapiens (Human).